The sequence spans 404 residues: MSSGALFPSLVPGSRGSSSKYLVEFRAGKMSLKGSTVTPDKRKGLVYIQQTDDSLIHFCWKDRTSGSVDDDLIIFPDDCEFKRVSQCTTGRVYVLKFKAGSKRLFFWMQEPKTDKDEEHCRKVNEYLNNPPMPGALGGSGSGSHELSALGGEGGLQSLLGNMSHNQLMQLIGPTGLGGLGGLGALTGPGLASLLGSGGPTTSSSSSSSRSQSAAVTPSSTTSSTRTTSAPVAPAAAPATTPSPAVSSNDGASAATSPTQAIQLSDLQNILATMNVPATGEGGQQVDLASVLTPEIMAPILANAEVQERLMPYLPSGESLPQTADEIQNTLTSPQFQQALSMFSAALASGQLGPLMSQFGLPADAVDAANKGDIEAFAKAMQSTSSQKERESSEKKEEEEDMSLD.

The Pru domain occupies Ser17–Pro130. Disordered stretches follow at residues Asn128–Leu149, Gly195–Thr258, and Phe376–Asp404. Residues Gly195 to Ser247 show a composition bias toward low complexity. Over residues Asn248–Thr258 the composition is skewed to polar residues. A DEUBAD domain is found at Thr278–Glu390. The span at Gln386–Lys395 shows a compositional bias: basic and acidic residues.

It belongs to the ADRM1 family. In terms of assembly, component of the 19S proteasome regulatory particle complex. The 26S proteasome consists of a 20S core particle (CP) and two 19S regulatory subunits (RP).

The protein localises to the cytoplasm. It is found in the nucleus. Its function is as follows. Component of the 26S proteasome, a multiprotein complex involved in the ATP-dependent degradation of ubiquitinated proteins. This complex plays a key role in the maintenance of protein homeostasis by removing misfolded or damaged proteins, which could impair cellular functions, and by removing proteins whose functions are no longer required. Therefore, the proteasome participates in numerous cellular processes, including cell cycle progression, apoptosis, or DNA damage repair. Within the complex, functions as a proteasomal ubiquitin receptor. The sequence is that of Proteasomal ubiquitin receptor ADRM1-B (adrm1-b) from Xenopus laevis (African clawed frog).